A 501-amino-acid chain; its full sequence is Cystine/glutamate transporter (501 aa).

The Cytoplasmic segment spans residues 1 to 43 (MVRKPVVSTISKGGYLQGNVNGRLPSLGNKEPPGQEKVQLKRK). A Phosphoserine modification is found at Ser26. The chain crosses the membrane as a helical span at residues 44-64 (VTLLRGVSIIIGTIIGAGIFI). The Extracellular segment spans residues 65 to 74 (SPKGVLQNTG). Residues 75–95 (SVGMSLTIWTVCGVLSLFGAL) traverse the membrane as a helical segment. The Cytoplasmic segment spans residues 96-101 (SYAELG). The stretch at 102-116 (TTIKKSGGHYTYILE) is an intramembrane region. Residues 117–130 (VFGPLPAFVRVWVE) are Cytoplasmic-facing. Residues 131 to 150 (LLIIRPAATAVISLAFGRYI) form a helical membrane-spanning segment. Arg135 serves as a coordination point for L-glutamate. At 151 to 163 (LEPFFIQCEIPEL) the chain is on the extracellular side. The helical transmembrane segment at 164 to 179 (AIKLITAVGITVVMVL) threads the bilayer. Residues 180-193 (NSMSVSWSARIQIF) are Cytoplasmic-facing. A helical membrane pass occupies residues 194-210 (LTFCKLTAILIIIVPGV). Over 211-234 (MQLIKGQTQNFKDAFSGRDSSITR) the chain is Extracellular. A helical membrane pass occupies residues 235-255 (LPLAFYYGMYAYAGWFYLNFV). Tyr244 provides a ligand contact to L-glutamate. Residues 256 to 265 (TEEVENPEKT) lie on the Cytoplasmic side of the membrane. Residues 266–286 (IPLAICISMAIVTIGYVLTNV) traverse the membrane as a helical segment. Residues 287 to 317 (AYFTTINAEELLLSNAVAVTFSERLLGNFSL) lie on the Extracellular side of the membrane. A glycan (N-linked (GlcNAc...) asparagine) is linked at Asn314. The chain crosses the membrane as a helical span at residues 318–338 (AVPIFVALSCFGSMNGGVFAV). Topologically, residues 339-364 (SRLFYVASREGHLPEILSMIHVRKHT) are cytoplasmic. The helical transmembrane segment at 365-385 (PLPAVIVLHPLTMIMLFSGDL) threads the bilayer. Residues 386–387 (DS) lie on the Extracellular side of the membrane. A helical membrane pass occupies residues 388-408 (LLNFLSFARWLFIGLAVAGLI). Residues 409–422 (YLRYKCPDMHRPFK) lie on the Cytoplasmic side of the membrane. The chain crosses the membrane as a helical span at residues 423-443 (VPLFIPALFSFTCLFMVALSL). Residues 444–449 (YSDPFS) are Extracellular-facing. Residues 450-470 (TGIGFVITLTGVPAYYLFIIW) traverse the membrane as a helical segment. Residues 471-501 (DKKPRWFRIMSEKITRTLQIILEVVPEEDKL) are Cytoplasmic-facing.

Belongs to the amino acid-polyamine-organocation (APC) superfamily. L-type amino acid transporter (LAT) (TC 2.A.3.8) family. Disulfide-linked heterodimer with the amino acid transport protein SLC3A2/4F2hc; this interaction mediates cell membrane localization. Post-translationally, ubiquitinated by TRIM26; leading to proteasomal degradation. As to expression, expressed in term placenta and primary term cytotrophoblast. Expressed mainly in the brain, but also in pancreas.

It is found in the cell membrane. Its subcellular location is the cell projection. The protein localises to the microvillus membrane. It carries out the reaction L-cystine(out) + L-glutamate(in) = L-cystine(in) + L-glutamate(out). It catalyses the reaction an L-alpha-amino acid(in) + L-kynurenine(out) = an L-alpha-amino acid(out) + L-kynurenine(in). The enzyme catalyses N-acetyl-L-cysteine(out) + L-glutamate(in) = N-acetyl-L-cysteine(in) + L-glutamate(out). Inhibited by erastin and sulfasalazine. Inhibited by (S)-lactate. Inactivated by p-chloromercuribenzoic acid and p-chloromercuribenzenesulfonic acid. Heterodimer with SLC3A2, that functions as an antiporter by mediating the exchange of extracellular anionic L-cystine and intracellular L-glutamate across the cellular plasma membrane. Provides L-cystine for the maintenance of the redox balance between extracellular L-cystine and L-cysteine and for the maintenance of the intracellular levels of glutathione that is essential for cells protection from oxidative stress. The transport is sodium-independent, electroneutral with a stoichiometry of 1:1, and is drove by the high intracellular concentration of L-glutamate and the intracellular reduction of L-cystine. In addition, mediates the import of L-kynurenine leading to anti-ferroptotic signaling propagation required to maintain L-cystine and glutathione homeostasis. Moreover, mediates N-acetyl-L-cysteine uptake into the placenta leading to subsequently down-regulation of pathways associated with oxidative stress, inflammation and apoptosis. In vitro can also transport L-aspartate. May participate in astrocyte and meningeal cell proliferation during development and can provide neuroprotection by promoting glutathione synthesis and delivery from non-neuronal cells such as astrocytes and meningeal cells to immature neurons. Controls the production of pheomelanin pigment directly. This is Cystine/glutamate transporter from Homo sapiens (Human).